The chain runs to 153 residues: Endoribonuclease YbeY (153 aa).

Residues His114, His118, and His124 each coordinate Zn(2+).

Belongs to the endoribonuclease YbeY family. Zn(2+) serves as cofactor.

The protein resides in the cytoplasm. Functionally, single strand-specific metallo-endoribonuclease involved in late-stage 70S ribosome quality control and in maturation of the 3' terminus of the 16S rRNA. The polypeptide is Endoribonuclease YbeY (Shewanella baltica (strain OS185)).